Reading from the N-terminus, the 209-residue chain is MAKFTVLNHPLIQHKLTIIRNKNTGTKVFREVANEIAELMVYEITRDLAMEDVEVETPMGPAIEKQLSGKKLAVVPILRAGLGMVDGVLELIPAAKVGHIGMYRDEKTLQPHEYFVKLPTDIDQRQLFIVDPMLATGGSAIMAIDALKKRGATSMRLVVLVAAPEGVKAVQEAHPDVDIYAAGLDDGLNEEGYIYPGLGDAGDRLFGTK.

Residues R79, R104, and 131 to 139 each bind 5-phospho-alpha-D-ribose 1-diphosphate; that span reads DPMLATGGS. Uracil-binding positions include I194 and 199 to 201; that span reads GDA. Residue D200 participates in 5-phospho-alpha-D-ribose 1-diphosphate binding.

This sequence belongs to the UPRTase family. Mg(2+) serves as cofactor.

The enzyme catalyses UMP + diphosphate = 5-phospho-alpha-D-ribose 1-diphosphate + uracil. It functions in the pathway pyrimidine metabolism; UMP biosynthesis via salvage pathway; UMP from uracil: step 1/1. Allosterically activated by GTP. In terms of biological role, catalyzes the conversion of uracil and 5-phospho-alpha-D-ribose 1-diphosphate (PRPP) to UMP and diphosphate. This is Uracil phosphoribosyltransferase from Latilactobacillus sakei (Lactobacillus sakei).